Consider the following 134-residue polypeptide: D-ribose pyranase (134 aa).

His20 functions as the Proton donor in the catalytic mechanism. Substrate is bound by residues Asp28, His99, and 123-125 (FSN).

The protein belongs to the RbsD / FucU family. RbsD subfamily. As to quaternary structure, homodecamer.

It localises to the cytoplasm. It catalyses the reaction beta-D-ribopyranose = beta-D-ribofuranose. It participates in carbohydrate metabolism; D-ribose degradation; D-ribose 5-phosphate from beta-D-ribopyranose: step 1/2. Its function is as follows. Catalyzes the interconversion of beta-pyran and beta-furan forms of D-ribose. The sequence is that of D-ribose pyranase from Staphylococcus epidermidis (strain ATCC 12228 / FDA PCI 1200).